Here is a 533-residue protein sequence, read N- to C-terminus: Multicopy suppressor of sporulation protein msa1 (533 aa).

The tract at residues 30 to 68 (DIPPGSLSENDNSTTFIKPPLETASSSTPIPSSSSSGVL) is disordered. The span at 36–45 (LSENDNSTTF) shows a compositional bias: polar residues. The segment covering 54–68 (SSSTPIPSSSSSGVL) has biased composition (low complexity). An RRM 1 domain is found at 79–158 (ACLFVASLNS…RHIRIERAKV (80 aa)). The segment at 237 to 292 (YKKKGSSPFSPPNAHSRRRKSQGKDQSNTPVIKAPAPIPFSVSSDPPSTMGRSNSA) is disordered. Residues 277–292 (SVSSDPPSTMGRSNSA) are compositionally biased toward polar residues. In terms of domain architecture, RRM 2 spans 365–441 (YSIFVGQLDP…KPLRVEFRQL (77 aa)).

Its subcellular location is the cytoplasm. Negative regulator of sexual differentiation. Acts by repressing the transcription of meiosis-inducing, ste11-regulated genes. The chain is Multicopy suppressor of sporulation protein msa1 (msa1) from Schizosaccharomyces pombe (strain 972 / ATCC 24843) (Fission yeast).